We begin with the raw amino-acid sequence, 146 residues long: Angiogenin (146 aa).

A signal peptide spans 1–24 (MVMGLGLFLLVFMLGLGLTPPTLA). Q25 is modified (pyrrolidone carboxylic acid). The active-site Proton acceptor is the H37. Residue R45 coordinates tRNA. 3 disulfide bridges follow: C50-C105, C63-C116, and C81-C131. Positions 55–59 (RRRHL) match the Nucleolar localization signal motif. TRNA contacts are provided by C105 and I127. The Proton donor role is filled by H138.

It belongs to the pancreatic ribonuclease family. As to quaternary structure, homodimer. Interacts with RNH1; inhibiting ANG ribonuclease activity. Interacts with PCNA.

The protein resides in the secreted. Its subcellular location is the nucleus. It localises to the nucleolus. The protein localises to the cytoplasm. It is found in the stress granule. With respect to regulation, has weak tRNA ribonuclease activity by itself due to partial autoinhibition by its C-terminus, which folds into a short alpha-helix that partially occludes the substrate-binding site. In absence of stress, the ribonuclease activity is inhibited by RNH1 in the cytoplasm. In response to stress, dissociates from RNH1 in the cytoplasm and associates with cytoplasmic ribosomes with vacant A-sites: ribosomes directly activate the tRNA ribonuclease activity of ANG by refolding the C-terminal alpha-helix. In response to stress, the angiogenic activity of ANG is inhibited by RNH1 in the nucleus. Secreted ribonuclease that can either promote or restrict cell proliferation of target cells, depending on the context. Endocytosed in target cells via its receptor PLXNB2 and translocates to the cytoplasm or nucleus. Under stress conditions, localizes to the cytoplasm and promotes the assembly of stress granules (SGs): specifically cleaves a subset of tRNAs within anticodon loops to produce tRNA-derived stress-induced fragments (tiRNAs), resulting in translation repression and inhibition of cell proliferation. tiRNas also prevent formation of apoptosome, thereby promoting cell survival. Preferentially cleaves RNAs between a pyrimidine and an adenosine residue, suggesting that it cleaves the anticodon loop of tRNA(Ala) (32-UUAGCAU-38) after positions 33 and 36. Cleaves a subset of tRNAs, including tRNA(Ala), tRNA(Glu), tRNA(Gly), tRNA(Lys), tRNA(Val), tRNA(His), tRNA(Asp) and tRNA(Sec). Under growth conditions and in differentiated cells, translocates to the nucleus and stimulates ribosomal RNA (rRNA) transcription, including that containing the initiation site sequences of 45S rRNA, thereby promoting cell growth and proliferation. Angiogenin induces vascularization of normal and malignant tissues via its ability to promote rRNA transcription. Involved in hematopoietic stem and progenitor cell (HSPC) growth and survival by promoting rRNA transcription in growth conditions and inhibiting translation in response to stress, respectively. Mediates the crosstalk between myeloid and intestinal epithelial cells to protect the intestinal epithelial barrier integrity: secreted by myeloid cells and promotes intestinal epithelial cells proliferation and survival. Also mediates osteoclast-endothelial cell crosstalk in growing bone: produced by osteoclasts and protects the neighboring vascular cells against senescence by promoting rRNA transcription. The chain is Angiogenin (ANG) from Chlorocebus aethiops (Green monkey).